Reading from the N-terminus, the 425-residue chain is Enolase (425 aa).

Gln-163 contacts (2R)-2-phosphoglycerate. Catalysis depends on Glu-205, which acts as the Proton donor. The Mg(2+) site is built by Asp-242, Glu-286, and Asp-313. (2R)-2-phosphoglycerate is bound by residues Lys-338, Arg-367, Ser-368, and Lys-389. The Proton acceptor role is filled by Lys-338.

This sequence belongs to the enolase family. Mg(2+) serves as cofactor.

The protein localises to the cytoplasm. The protein resides in the secreted. It is found in the cell surface. The catalysed reaction is (2R)-2-phosphoglycerate = phosphoenolpyruvate + H2O. It participates in carbohydrate degradation; glycolysis; pyruvate from D-glyceraldehyde 3-phosphate: step 4/5. Its function is as follows. Catalyzes the reversible conversion of 2-phosphoglycerate (2-PG) into phosphoenolpyruvate (PEP). It is essential for the degradation of carbohydrates via glycolysis. This is Enolase from Helicobacter hepaticus (strain ATCC 51449 / 3B1).